A 1462-amino-acid chain; its full sequence is Iron-sulfur cluster assembly protein SufD (1462 aa).

Disordered regions lie at residues 500 to 525 (IDNNQNDDIDNNNNNNNNNNNCDNPY), 938 to 970 (NQNKENENENENNSQSDNNTTKQHIQDEQGTEQ), and 1111 to 1153 (NIPS…EKEE). Over residues 510 to 523 (NNNNNNNNNNNCDN) the composition is skewed to low complexity. Residues 961 to 970 (HIQDEQGTEQ) show a composition bias toward basic and acidic residues. Residues 1111-1136 (NIPSNNKQTNSNNNSEYNNEQNNCSN) show a composition bias toward low complexity.

Belongs to the iron-sulfur cluster assembly SufBD family. In terms of assembly, component of a complex composed of SufB, SufC and SufD in a stoichiometric ratio of 1:2:1. Interacts with SufB. Interacts with SufC; the interaction enhances the ATPase activity of SufC. Proteolytically cleaved.

It localises to the plastid. The protein localises to the apicoplast. It functions in the pathway cofactor biosynthesis; iron-sulfur cluster biosynthesis. Its function is as follows. Participates in the sulfur mobilization (SUF) pathway for iron-sulfur (Fe-S) cluster biogenesis. As part of a complex consisting of SufB-SufC(2)-SufD, involved in assembly of [4Fe-4S] clusters. Enhances the ATPase activity of SufC. The polypeptide is Iron-sulfur cluster assembly protein SufD (Plasmodium falciparum (isolate 3D7)).